We begin with the raw amino-acid sequence, 297 residues long: Band 7 protein AAEL010189 (297 aa).

The span at 1-13 (MGVVESITNSTKP) shows a compositional bias: polar residues. The disordered stretch occupies residues 1 to 30 (MGVVESITNSTKPGVTKKSSPEAEDDSNGE). The helical transmembrane segment at 37–57 (ILIFLSWVLVVLTMPFSLLVC) threads the bilayer.

It belongs to the band 7/mec-2 family.

Its subcellular location is the membrane. This is Band 7 protein AAEL010189 from Aedes aegypti (Yellowfever mosquito).